A 739-amino-acid polypeptide reads, in one-letter code: Phosphoribosylformylglycinamidine synthase subunit PurL (739 aa).

Residue histidine 54 is part of the active site. ATP is bound by residues tyrosine 57 and lysine 96. Position 98 (glutamate 98) interacts with Mg(2+). Substrate-binding positions include serine 99–histidine 102 and arginine 121. The active-site Proton acceptor is histidine 100. Residue aspartate 122 participates in Mg(2+) binding. Residue glutamine 245 coordinates substrate. Aspartate 273 is a binding site for Mg(2+). Glutamate 317–glutamine 319 contacts substrate. ATP contacts are provided by aspartate 500 and glycine 537. Asparagine 538 is a binding site for Mg(2+). Residue serine 540 coordinates substrate.

It belongs to the FGAMS family. In terms of assembly, monomer. Part of the FGAM synthase complex composed of 1 PurL, 1 PurQ and 2 PurS subunits.

It is found in the cytoplasm. The catalysed reaction is N(2)-formyl-N(1)-(5-phospho-beta-D-ribosyl)glycinamide + L-glutamine + ATP + H2O = 2-formamido-N(1)-(5-O-phospho-beta-D-ribosyl)acetamidine + L-glutamate + ADP + phosphate + H(+). The protein operates within purine metabolism; IMP biosynthesis via de novo pathway; 5-amino-1-(5-phospho-D-ribosyl)imidazole from N(2)-formyl-N(1)-(5-phospho-D-ribosyl)glycinamide: step 1/2. Its function is as follows. Part of the phosphoribosylformylglycinamidine synthase complex involved in the purines biosynthetic pathway. Catalyzes the ATP-dependent conversion of formylglycinamide ribonucleotide (FGAR) and glutamine to yield formylglycinamidine ribonucleotide (FGAM) and glutamate. The FGAM synthase complex is composed of three subunits. PurQ produces an ammonia molecule by converting glutamine to glutamate. PurL transfers the ammonia molecule to FGAR to form FGAM in an ATP-dependent manner. PurS interacts with PurQ and PurL and is thought to assist in the transfer of the ammonia molecule from PurQ to PurL. This is Phosphoribosylformylglycinamidine synthase subunit PurL from Bacillus cereus (strain B4264).